A 447-amino-acid polypeptide reads, in one-letter code: 1-aminocyclopropane-1-carboxylate synthase 7 (447 aa).

Substrate contacts are provided by Glu61 and Tyr100. Lys285 carries the N6-(pyridoxal phosphate)lysine modification.

It belongs to the class-I pyridoxal-phosphate-dependent aminotransferase family. Homodimer and heterodimer. In vivo, the relevance of heterodimerization with other ACS enzymes is however unsure. Interacts with XBAT32. The cofactor is pyridoxal 5'-phosphate. Post-translationally, ubiquitinated by XBAT32. Ubiquitination probably leads to its subsequent degradation, thus controlling ethylene production. In terms of tissue distribution, expressed in roots.

It catalyses the reaction S-adenosyl-L-methionine = 1-aminocyclopropane-1-carboxylate + S-methyl-5'-thioadenosine + H(+). The protein operates within alkene biosynthesis; ethylene biosynthesis via S-adenosyl-L-methionine; ethylene from S-adenosyl-L-methionine: step 1/2. Functionally, 1-aminocyclopropane-1-carboxylate synthase (ACS) enzymes catalyze the conversion of S-adenosyl-L-methionine (SAM) into 1-aminocyclopropane-1-carboxylate (ACC), a direct precursor of ethylene. This is 1-aminocyclopropane-1-carboxylate synthase 7 (ACS7) from Arabidopsis thaliana (Mouse-ear cress).